The primary structure comprises 338 residues: Glycerol-3-phosphate dehydrogenase [NAD(P)+] (338 aa).

NADPH contacts are provided by S13, W14, and K108. Sn-glycerol 3-phosphate contacts are provided by K108, G139, and S141. A143 lines the NADPH pocket. Sn-glycerol 3-phosphate contacts are provided by K194, D247, S257, R258, and N259. The active-site Proton acceptor is the K194. R258 lines the NADPH pocket. 2 residues coordinate NADPH: V282 and E284.

It belongs to the NAD-dependent glycerol-3-phosphate dehydrogenase family.

The protein localises to the cytoplasm. The catalysed reaction is sn-glycerol 3-phosphate + NAD(+) = dihydroxyacetone phosphate + NADH + H(+). The enzyme catalyses sn-glycerol 3-phosphate + NADP(+) = dihydroxyacetone phosphate + NADPH + H(+). It participates in membrane lipid metabolism; glycerophospholipid metabolism. Functionally, catalyzes the reduction of the glycolytic intermediate dihydroxyacetone phosphate (DHAP) to sn-glycerol 3-phosphate (G3P), the key precursor for phospholipid synthesis. In Streptococcus pyogenes serotype M28 (strain MGAS6180), this protein is Glycerol-3-phosphate dehydrogenase [NAD(P)+].